The primary structure comprises 431 residues: POU domain, class 2, transcription factor 3 (431 aa).

3 disordered regions span residues 1 to 39, 130 to 180, and 248 to 267; these read MVNL…RNGL, LLPQ…EPTD, and DAES…YPTL. Residues 176 to 250 enclose the POU-specific domain; the sequence is DEPTDLEELE…LLEKWLNDAE (75 aa). Low complexity predominate over residues 251 to 267; that stretch reads SSPSDPSASTPSSYPTL. The segment at residues 274–333 is a DNA-binding region (homeobox); sequence KRKKRTSIETNIRLTLEKRFQDNPKPSSEEISMIAEQLSMEKEVVRVWFCNRRQKEKRIN. Composition is skewed to low complexity over residues 352–364, 374–390, and 398–419; these read PSGS…VPPV, SSCS…PGSG, and ASQN…NSSG. Residues 352–419 are disordered; the sequence is PSGSLGPLSV…SSSSSFNSSG (68 aa).

This sequence belongs to the POU transcription factor family. Class-2 subfamily. As to quaternary structure, interacts (via the POU domain) with POU2AF1 and POU2AF2 in a DNA-dependent manner; this interaction recruits POU2AF2 to chromatin and increases POU2F3 transactivation activity. As to expression, skin, thymus, stomach and testis.

It localises to the nucleus. Its function is as follows. Transcription factor that binds to the octamer motif (5'-ATTTGCAT-3'). Regulates cell type-specific differentiation pathways. Involved in the regulation of keratinocytes differentiation. The POU2F3-POU2AF2/POU2AF3 complex drives the expression of tuft-cell-specific genes, a rare chemosensory cells that coordinate immune and neural functions within mucosal epithelial tissues. The chain is POU domain, class 2, transcription factor 3 (Pou2f3) from Mus musculus (Mouse).